The primary structure comprises 335 residues: Protein BIG1 (335 aa).

The signal sequence occupies residues 1-17 (MQTVLKYLLLIMCGSFC). The Lumenal segment spans residues 20-275 (EELQNQTNVP…FDSQLIENNR (256 aa)). Residues Asn24 and Asn144 are each glycosylated (N-linked (GlcNAc...) asparagine). The chain crosses the membrane as a helical span at residues 276–296 (GLLQLIFTILVGYILIQFFFT). The Cytoplasmic portion of the chain corresponds to 297-335 (KKTIVDEKITNKKDNVKQTSPQLLKKVQEIQKKPSQQVS).

It belongs to the BIG1 family. Post-translationally, N-glycosylated.

The protein localises to the endoplasmic reticulum membrane. Functionally, required for normal beta-1,6-glucan synthesis. This chain is Protein BIG1 (BIG1), found in Saccharomyces cerevisiae (strain ATCC 204508 / S288c) (Baker's yeast).